Here is a 256-residue protein sequence, read N- to C-terminus: Ubiquinone/menaquinone biosynthesis C-methyltransferase UbiE (256 aa).

S-adenosyl-L-methionine-binding positions include threonine 79, aspartate 100, and 128-129; that span reads DA.

It belongs to the class I-like SAM-binding methyltransferase superfamily. MenG/UbiE family.

It catalyses the reaction a 2-demethylmenaquinol + S-adenosyl-L-methionine = a menaquinol + S-adenosyl-L-homocysteine + H(+). It carries out the reaction a 2-methoxy-6-(all-trans-polyprenyl)benzene-1,4-diol + S-adenosyl-L-methionine = a 5-methoxy-2-methyl-3-(all-trans-polyprenyl)benzene-1,4-diol + S-adenosyl-L-homocysteine + H(+). It participates in quinol/quinone metabolism; menaquinone biosynthesis; menaquinol from 1,4-dihydroxy-2-naphthoate: step 2/2. The protein operates within cofactor biosynthesis; ubiquinone biosynthesis. In terms of biological role, methyltransferase required for the conversion of demethylmenaquinol (DMKH2) to menaquinol (MKH2) and the conversion of 2-polyprenyl-6-methoxy-1,4-benzoquinol (DDMQH2) to 2-polyprenyl-3-methyl-6-methoxy-1,4-benzoquinol (DMQH2). The sequence is that of Ubiquinone/menaquinone biosynthesis C-methyltransferase UbiE from Pseudomonas savastanoi pv. phaseolicola (strain 1448A / Race 6) (Pseudomonas syringae pv. phaseolicola (strain 1448A / Race 6)).